The chain runs to 28 residues: Grammistin Gs A (28 aa).

Belongs to the grammistin family. Group 3 subfamily. Exists as aggregates of 3-4 molecules. As to expression, expressed by the skin glands.

Its subcellular location is the secreted. Its function is as follows. Thanks to its amphiphilic alpha-helice(s), it may integrate into membrane phospholipids, leading to lysis of the membrane. Has no substantial hemolytic activity. Has antibacterial activity with a broad spectrum against various species of bacteria including both Gram-positive and Gram-negative groups. The sequence is that of Grammistin Gs A from Grammistes sexlineatus (Goldenstriped soapfish).